The following is a 171-amino-acid chain: Large ribosomal subunit protein uL10 (171 aa).

The protein belongs to the universal ribosomal protein uL10 family. Part of the ribosomal stalk of the 50S ribosomal subunit. The N-terminus interacts with L11 and the large rRNA to form the base of the stalk. The C-terminus forms an elongated spine to which L12 dimers bind in a sequential fashion forming a multimeric L10(L12)X complex.

Its function is as follows. Forms part of the ribosomal stalk, playing a central role in the interaction of the ribosome with GTP-bound translation factors. In Corynebacterium glutamicum (strain R), this protein is Large ribosomal subunit protein uL10.